The primary structure comprises 420 residues: Multifunctional CCA protein (420 aa).

2 residues coordinate ATP: Gly8 and Arg11. Residues Gly8 and Arg11 each coordinate CTP. Asp21 and Asp23 together coordinate Mg(2+). 3 residues coordinate ATP: Arg91, Arg137, and Arg140. 3 residues coordinate CTP: Arg91, Arg137, and Arg140. Residues 228-334 (TFVHTMLVLQ…LKLFNRLDVW (107 aa)) form the HD domain.

This sequence belongs to the tRNA nucleotidyltransferase/poly(A) polymerase family. Bacterial CCA-adding enzyme type 1 subfamily. In terms of assembly, monomer. Can also form homodimers and oligomers. Mg(2+) is required as a cofactor. The cofactor is Ni(2+).

It catalyses the reaction a tRNA precursor + 2 CTP + ATP = a tRNA with a 3' CCA end + 3 diphosphate. It carries out the reaction a tRNA with a 3' CCA end + 2 CTP + ATP = a tRNA with a 3' CCACCA end + 3 diphosphate. In terms of biological role, catalyzes the addition and repair of the essential 3'-terminal CCA sequence in tRNAs without using a nucleic acid template. Adds these three nucleotides in the order of C, C, and A to the tRNA nucleotide-73, using CTP and ATP as substrates and producing inorganic pyrophosphate. tRNA 3'-terminal CCA addition is required both for tRNA processing and repair. Also involved in tRNA surveillance by mediating tandem CCA addition to generate a CCACCA at the 3' terminus of unstable tRNAs. While stable tRNAs receive only 3'-terminal CCA, unstable tRNAs are marked with CCACCA and rapidly degraded. The protein is Multifunctional CCA protein of Pasteurella multocida (strain Pm70).